A 734-amino-acid polypeptide reads, in one-letter code: Monosaccharide-sensing protein 1 (734 aa).

Helical transmembrane passes span 6-26 (LVAL…ATIA), 44-64 (GLVV…SGPI), 79-99 (VMYF…VLCF), 102-122 (LLNG…ISET), 133-153 (TLPQ…VFTM), and 163-183 (AMLG…VFYL). The segment at 351–403 (YNKDNDDYATDDGAGDDDDSDNDLRSPLMSRQTTSMDKDMIPHPTSGSTLSMR) is disordered. Residues 357-371 (DYATDDGAGDDDDSD) show a composition bias toward acidic residues. 2 positions are modified to phosphoserine: serine 446 and serine 480. 6 helical membrane-spanning segments follow: residues 510–530 (ALVV…NGVL), 556–576 (ASFL…VVAM), 588–608 (LLWT…SELI), 621–641 (GCVV…PNIL), 653–673 (LCIA…TYSL), and 680–700 (IGLV…WIFV).

This sequence belongs to the major facilitator superfamily. Sugar transporter (TC 2.A.1.1) family. As to quaternary structure, binds to VIK at the tonoplast. Phosphorylated by VIK; this activation promotes carrier activity. As to expression, mostly expressed in juvenile and adult leaves, to a lower extent, in flower tissues, and, at low levels, in roots and stems.

The protein resides in the vacuole membrane. It catalyses the reaction D-glucose(out) + H(+)(in) = D-glucose(in) + H(+)(out). The enzyme catalyses sucrose(out) + H(+)(in) = sucrose(in) + H(+)(out). Its activity is regulated as follows. Enhanced activation by VIK-mediated phosphorylation promoting carrier activity and consequently vacuolar sugar accumulation. Its function is as follows. Sugar proton-coupled antiporter which contributes to vacuolar sugar import (e.g. monosaccharides including glucose, sucrose and fructose), particularly during stress responses (e.g. in response to cold). Required for cytosolic glucose homeostasis. The polypeptide is Monosaccharide-sensing protein 1 (Arabidopsis thaliana (Mouse-ear cress)).